The following is a 123-amino-acid chain: Small ribosomal subunit protein uS12 (123 aa).

At aspartate 89 the chain carries 3-methylthioaspartic acid.

This sequence belongs to the universal ribosomal protein uS12 family. Part of the 30S ribosomal subunit. Contacts proteins S8 and S17. May interact with IF1 in the 30S initiation complex.

In terms of biological role, with S4 and S5 plays an important role in translational accuracy. Functionally, interacts with and stabilizes bases of the 16S rRNA that are involved in tRNA selection in the A site and with the mRNA backbone. Located at the interface of the 30S and 50S subunits, it traverses the body of the 30S subunit contacting proteins on the other side and probably holding the rRNA structure together. The combined cluster of proteins S8, S12 and S17 appears to hold together the shoulder and platform of the 30S subunit. The protein is Small ribosomal subunit protein uS12 of Orientia tsutsugamushi (strain Ikeda) (Rickettsia tsutsugamushi).